The primary structure comprises 443 residues: Postreplication repair E3 ubiquitin-protein ligase rad18 (443 aa).

An RING-type zinc finger spans residues cysteine 30–arginine 68. A disordered region spans residues glycine 106 to threonine 157. Positions threonine 143–threonine 157 are enriched in polar residues. The segment at leucine 175–glutamate 202 adopts a UBZ4-type zinc-finger fold. Positions 178, 181, 193, and 197 each coordinate Zn(2+). The region spanning leucine 239–tryptophan 273 is the SAP domain. 2 stretches are compositionally biased toward polar residues: residues isoleucine 350 to serine 363 and proline 431 to histidine 443. Positions isoleucine 350–histidine 443 are disordered.

It belongs to the RAD18 family. As to quaternary structure, interacts with E2 UBC2, forming a complex with ubiquitin ligase activity.

Its subcellular location is the nucleus. The catalysed reaction is S-ubiquitinyl-[E2 ubiquitin-conjugating enzyme]-L-cysteine + [acceptor protein]-L-lysine = [E2 ubiquitin-conjugating enzyme]-L-cysteine + N(6)-ubiquitinyl-[acceptor protein]-L-lysine.. It functions in the pathway protein modification; protein ubiquitination. In terms of biological role, E3 RING-finger protein, member of the UBC2/RAD6 epistasis group. Associates to the E2 ubiquitin conjugating enzyme UBC2/RAD6 to form the UBC2-RAD18 ubiquitin ligase complex involved in postreplicative repair (PRR) of damaged DNA. This Emericella nidulans (strain FGSC A4 / ATCC 38163 / CBS 112.46 / NRRL 194 / M139) (Aspergillus nidulans) protein is Postreplication repair E3 ubiquitin-protein ligase rad18 (uvsH).